The chain runs to 190 residues: ATP synthase subunit C lysine N-methyltransferase (190 aa).

Belongs to the ANT/ATPSC lysine N-methyltransferase family.

Its subcellular location is the mitochondrion. It catalyses the reaction L-lysyl-[protein] + 3 S-adenosyl-L-methionine = N(6),N(6),N(6)-trimethyl-L-lysyl-[protein] + 3 S-adenosyl-L-homocysteine + 3 H(+). Mitochondrial protein-lysine N-methyltransferase that trimethylates ATP synthase subunit C. Trimethylation is required for proper incorporation of the C subunit into the ATP synthase complex and mitochondrial respiration. This Caenorhabditis elegans protein is ATP synthase subunit C lysine N-methyltransferase.